Reading from the N-terminus, the 410-residue chain is Peptidase T (410 aa).

Position 79 (histidine 79) interacts with Zn(2+). Residue aspartate 81 is part of the active site. Aspartate 142 serves as a coordination point for Zn(2+). The active-site Proton acceptor is glutamate 176. Residues glutamate 177, aspartate 199, and histidine 381 each contribute to the Zn(2+) site.

The protein belongs to the peptidase M20B family. Zn(2+) is required as a cofactor.

The protein resides in the cytoplasm. The enzyme catalyses Release of the N-terminal residue from a tripeptide.. Its function is as follows. Cleaves the N-terminal amino acid of tripeptides. This Bacillus thuringiensis subsp. konkukian (strain 97-27) protein is Peptidase T.